The following is a 342-amino-acid chain: Isopentenyl-diphosphate delta-isomerase (342 aa).

Residue 11-12 participates in substrate binding; that stretch reads RK. FMN-binding positions include serine 68, 69–71, serine 99, and asparagine 127; that span reads SMT. Position 99 to 101 (99 to 101) interacts with substrate; it reads SMR. Glutamine 162 contacts substrate. Mg(2+) is bound at residue glutamate 163. Residues lysine 194, threonine 224, 274–276, and 295–296 contribute to the FMN site; these read GLK and AG.

Belongs to the IPP isomerase type 2 family. Homooctamer. Dimer of tetramers. Requires FMN as cofactor. It depends on NADPH as a cofactor. Mg(2+) serves as cofactor.

The protein resides in the cytoplasm. It catalyses the reaction isopentenyl diphosphate = dimethylallyl diphosphate. Its function is as follows. Involved in the biosynthesis of isoprenoids. Catalyzes the 1,3-allylic rearrangement of the homoallylic substrate isopentenyl (IPP) to its allylic isomer, dimethylallyl diphosphate (DMAPP). The protein is Isopentenyl-diphosphate delta-isomerase of Rickettsia peacockii (strain Rustic).